A 1008-amino-acid polypeptide reads, in one-letter code: Probable pre-mRNA-splicing factor ATP-dependent RNA helicase mog-4 (1008 aa).

Disordered regions lie at residues 104–146 (SSTK…SESD) and 169–202 (NKKE…REES). Positions 127 to 137 (KASKPGKSVKP) are enriched in low complexity. The Helicase ATP-binding domain maps to 374–538 (IEAVKEHQVL…FDDAPIFRIP (165 aa)). Position 387-394 (387-394 (GETGSGKT)) interacts with ATP. The DEAH box signature appears at 485–488 (DEAH). Positions 563–737 (TIMQIHLTQP…NVVLMLKSLG (175 aa)) constitute a Helicase C-terminal domain. Residues 988–1008 (EDATNKKMPKNKGKSGKDLER) are disordered.

It belongs to the DEAD box helicase family. DEAH subfamily. DDX16/PRP8 sub-subfamily. In terms of assembly, interacts with mep-1 and smn-1.

The protein localises to the nucleus. The enzyme catalyses ATP + H2O = ADP + phosphate + H(+). Functionally, ATP-binding RNA helicase involved in pre-mRNA splicing. Operates during embryogenesis. This chain is Probable pre-mRNA-splicing factor ATP-dependent RNA helicase mog-4 (mog-4), found in Caenorhabditis elegans.